A 153-amino-acid polypeptide reads, in one-letter code: MTHDNKLQVEAIKCGTVIDHIPAQVGFKLLSLFKLTETDQRITIGLNLPSGEMGRKDLIKIENTFLTDEQVNQLALYAPQATVNRIDNYDVVGKSRPSLPERINNVLVCPNSNCISHAEPVSSSFAVKKRANDIALKCKYCEKEFSHNVVLAN.

Cysteine 109, cysteine 114, cysteine 138, and cysteine 141 together coordinate Zn(2+).

Belongs to the PyrI family. Contains catalytic and regulatory chains. Requires Zn(2+) as cofactor.

Involved in allosteric regulation of aspartate carbamoyltransferase. The protein is Aspartate carbamoyltransferase regulatory chain of Salmonella schwarzengrund (strain CVM19633).